Here is a 51-residue protein sequence, read N- to C-terminus: Large ribosomal subunit protein eL39 (51 aa).

Belongs to the eukaryotic ribosomal protein eL39 family.

This chain is Large ribosomal subunit protein eL39 (rpl39e), found in Thermoplasma acidophilum (strain ATCC 25905 / DSM 1728 / JCM 9062 / NBRC 15155 / AMRC-C165).